The primary structure comprises 193 residues: Holliday junction branch migration complex subunit RuvA (193 aa).

Residues 1-64 are domain I; sequence MIGRIQGTLV…EDAQQLFGFA (64 aa). The interval 65-139 is domain II; that stretch reads TETEREAFRQ…GKLAPDLGVA (75 aa). Residues 139–143 form a flexible linker region; sequence AGGKP. Residues 144–193 form a domain III region; it reads QAIETSSEVLQALLALGYSEKEALLALKQIPADTSISDGIRMGLKYLSKA.

The protein belongs to the RuvA family. In terms of assembly, homotetramer. Forms an RuvA(8)-RuvB(12)-Holliday junction (HJ) complex. HJ DNA is sandwiched between 2 RuvA tetramers; dsDNA enters through RuvA and exits via RuvB. An RuvB hexamer assembles on each DNA strand where it exits the tetramer. Each RuvB hexamer is contacted by two RuvA subunits (via domain III) on 2 adjacent RuvB subunits; this complex drives branch migration. In the full resolvosome a probable DNA-RuvA(4)-RuvB(12)-RuvC(2) complex forms which resolves the HJ.

Its subcellular location is the cytoplasm. In terms of biological role, the RuvA-RuvB-RuvC complex processes Holliday junction (HJ) DNA during genetic recombination and DNA repair, while the RuvA-RuvB complex plays an important role in the rescue of blocked DNA replication forks via replication fork reversal (RFR). RuvA specifically binds to HJ cruciform DNA, conferring on it an open structure. The RuvB hexamer acts as an ATP-dependent pump, pulling dsDNA into and through the RuvAB complex. HJ branch migration allows RuvC to scan DNA until it finds its consensus sequence, where it cleaves and resolves the cruciform DNA. This is Holliday junction branch migration complex subunit RuvA from Polynucleobacter necessarius subsp. necessarius (strain STIR1).